We begin with the raw amino-acid sequence, 313 residues long: tRNA (guanine-N(7)-)-methyltransferase (313 aa).

The S-adenosyl-L-methionine site is built by E33, E58, and D85. Residues K112, D144, and 177 to 180 (TRYE) contribute to the substrate site.

This sequence belongs to the class I-like SAM-binding methyltransferase superfamily. TrmB family.

The enzyme catalyses guanosine(46) in tRNA + S-adenosyl-L-methionine = N(7)-methylguanosine(46) in tRNA + S-adenosyl-L-homocysteine. It functions in the pathway tRNA modification; N(7)-methylguanine-tRNA biosynthesis. Catalyzes the formation of N(7)-methylguanine at position 46 (m7G46) in tRNA. This is tRNA (guanine-N(7)-)-methyltransferase from Thermotoga maritima (strain ATCC 43589 / DSM 3109 / JCM 10099 / NBRC 100826 / MSB8).